The chain runs to 157 residues: 6,7-dimethyl-8-ribityllumazine synthase (157 aa).

5-amino-6-(D-ribitylamino)uracil contacts are provided by residues Phe-24, 56–58 (SFE), and 79–81 (VLI). 84–85 (ET) lines the (2S)-2-hydroxy-3-oxobutyl phosphate pocket. His-87 functions as the Proton donor in the catalytic mechanism. Phe-112 contributes to the 5-amino-6-(D-ribitylamino)uracil binding site. Arg-126 is a binding site for (2S)-2-hydroxy-3-oxobutyl phosphate.

This sequence belongs to the DMRL synthase family.

It catalyses the reaction (2S)-2-hydroxy-3-oxobutyl phosphate + 5-amino-6-(D-ribitylamino)uracil = 6,7-dimethyl-8-(1-D-ribityl)lumazine + phosphate + 2 H2O + H(+). It functions in the pathway cofactor biosynthesis; riboflavin biosynthesis; riboflavin from 2-hydroxy-3-oxobutyl phosphate and 5-amino-6-(D-ribitylamino)uracil: step 1/2. Its function is as follows. Catalyzes the formation of 6,7-dimethyl-8-ribityllumazine by condensation of 5-amino-6-(D-ribitylamino)uracil with 3,4-dihydroxy-2-butanone 4-phosphate. This is the penultimate step in the biosynthesis of riboflavin. The polypeptide is 6,7-dimethyl-8-ribityllumazine synthase (Pyrococcus furiosus (strain ATCC 43587 / DSM 3638 / JCM 8422 / Vc1)).